The following is a 577-amino-acid chain: Adenine deaminase (577 aa).

The protein belongs to the metallo-dependent hydrolases superfamily. Adenine deaminase family. Requires Mn(2+) as cofactor.

It catalyses the reaction adenine + H2O + H(+) = hypoxanthine + NH4(+). The protein is Adenine deaminase (adeC) of Bacillus subtilis (strain 168).